A 331-amino-acid chain; its full sequence is Beta-ketoacyl-[acyl-carrier-protein] synthase III (331 aa).

Catalysis depends on residues C116 and H256. Residues 257–261 are ACP-binding; sequence QANTR. The active site involves N286.

Belongs to the thiolase-like superfamily. FabH family. Homodimer.

The protein localises to the cytoplasm. It catalyses the reaction malonyl-[ACP] + acetyl-CoA + H(+) = 3-oxobutanoyl-[ACP] + CO2 + CoA. It participates in lipid metabolism; fatty acid biosynthesis. Its function is as follows. Catalyzes the condensation reaction of fatty acid synthesis by the addition to an acyl acceptor of two carbons from malonyl-ACP. Catalyzes the first condensation reaction which initiates fatty acid synthesis and may therefore play a role in governing the total rate of fatty acid production. Possesses both acetoacetyl-ACP synthase and acetyl transacylase activities. Its substrate specificity determines the biosynthesis of branched-chain and/or straight-chain of fatty acids. The protein is Beta-ketoacyl-[acyl-carrier-protein] synthase III of Caldanaerobacter subterraneus subsp. tengcongensis (strain DSM 15242 / JCM 11007 / NBRC 100824 / MB4) (Thermoanaerobacter tengcongensis).